Here is a 340-residue protein sequence, read N- to C-terminus: Glyceraldehyde-3-phosphate dehydrogenase (340 aa).

Residues 11–12 (SI) and Gly111 each bind NAD(+). 140-142 (SCN) contacts D-glyceraldehyde 3-phosphate. Cys141 serves as the catalytic Nucleophile. Arg169 contributes to the NAD(+) binding site. 195-196 (HG) is a D-glyceraldehyde 3-phosphate binding site. Position 303 (Gln303) interacts with NAD(+).

It belongs to the glyceraldehyde-3-phosphate dehydrogenase family. As to quaternary structure, homotetramer.

It is found in the cytoplasm. It catalyses the reaction D-glyceraldehyde 3-phosphate + phosphate + NADP(+) = (2R)-3-phospho-glyceroyl phosphate + NADPH + H(+). The enzyme catalyses D-glyceraldehyde 3-phosphate + phosphate + NAD(+) = (2R)-3-phospho-glyceroyl phosphate + NADH + H(+). It participates in carbohydrate degradation; glycolysis; pyruvate from D-glyceraldehyde 3-phosphate: step 1/5. The sequence is that of Glyceraldehyde-3-phosphate dehydrogenase from Methanococcus maripaludis (strain C6 / ATCC BAA-1332).